The sequence spans 498 residues: Probable FAD-binding monooxygenase AlmA (498 aa).

A helical membrane pass occupies residues 4-24 (HIDILIVGAGISGIGIAAHLS). FAD is bound by residues Ser15, Glu36, Asp56, Phe62, and Val104. 54–56 (RSD) is a binding site for NADP(+). NADP(+) contacts are provided by residues 184-190 (SGATAIT), 208-209 (RS), and 292-293 (RL). Residue Val395 coordinates FAD.

The protein belongs to the FAD-binding monooxygenase family. The cofactor is FAD.

It localises to the cell membrane. Its pathway is hydrocarbon metabolism; alkane degradation. Functionally, is able to catalyze the degradation of n-alkanes with C chain lengths of 32 and 36. Probably allows Acinetobacter baylyi strain ADP1 to grow on the long-chain n-alkane dotriacontane (C32H66) as a sole carbon source. The chain is Probable FAD-binding monooxygenase AlmA from Acinetobacter baylyi (strain ATCC 33305 / BD413 / ADP1).